A 930-amino-acid polypeptide reads, in one-letter code: MPQEEVHDTSSVSDDNLTNTGGGGSNYYNSHNQPNVFVRAIRSIFGYRKTSLTLFVILTIIFTIALSLYDNNLDLTIELPTNKLENEILKSSWLDLQNIARYPHTYGSRANDRVHDYLESRIHDIIKENPYTEYNNDGEKVLYESAKSIVSYYESNNLLVRINGSDASLPALLLSAHYDSVPSSFGVTDDGMGIASLLGVLRFFAQNEQPRRTVIFNFNNDEEFGLYGAQAFVSHPWFKQIGFFLNLEGTGAGGKAILFRGTDYGIVKYFNKVRYPYATSIFQQGFNNHLIHSETDYKVYKEAGLRGLDLAFYKPRDIYHTAEDNIKNINLKSLWHMLSNSIDFANFVSNQKINDSGKDEFAVYTSFLGYFFSSPISALVTINSVLIVLFPILSGPLLFITVRYKKWKIGTSNFLSLPLAIVLTVAIVMIVVNQGFQIANPFLPSSHPLLLVATTTSISLLIYYVFLNGVNWVSPSGDQKLITIIEISFIYWLILIYVTHGLSQNKIGDDHTGEFPFTVLFFLEATASLFGLIGWTFSRSIKQSSNDGSDEPLLTGTAERYGSDDTDEDEQEEFRHHDGNTVKHLMQHFGYDWSLQYLLIVPISSLIIFNSGWLVLDGINKSIQESFAAENLIYLLIQLFSQFWILPILPFVYKLNRFIVFGLTIFAISGVALISFLDPFNQENPLKLRFIQKVDLNKSQDSFVEVYGRKGIFSDILSDMPSVKETHTKVECEALSDGLEACSYKSALAPNVIPGKSLKDYVNVEIVNSSKIESYGLLSGEIIITAPENRMCTLYFTKKKVKAVVIYNKSKSVNNFKSIPDGFSRDSKGNYIYKDVAGIDQLVLNKLDWNKNYHIGFDWLPNIDDEVNTLSVDVECYWADLAPGIGGGDNATNAELAIPAYNELVHYSPNWVTWANREKGLVSVSLKIEV.

Positions 1-28 (MPQEEVHDTSSVSDDNLTNTGGGGSNYY) are disordered. The Cytoplasmic portion of the chain corresponds to 1–49 (MPQEEVHDTSSVSDDNLTNTGGGGSNYYNSHNQPNVFVRAIRSIFGYRK). Residues 50-70 (TSLTLFVILTIIFTIALSLYD) traverse the membrane as a helical segment. Residues 71–379 (NNLDLTIELP…YFFSSPISAL (309 aa)) lie on the Vacuolar side of the membrane. An N-linked (GlcNAc...) asparagine glycan is attached at Asn163. Zn(2+)-binding residues include His177 and Asp189. Residue Glu222 is the Proton acceptor of the active site. Positions 223, 248, and 320 each coordinate Zn(2+). The N-linked (GlcNAc...) asparagine glycan is linked to Asn354. The chain crosses the membrane as a helical span at residues 380–400 (VTINSVLIVLFPILSGPLLFI). Residues 401–411 (TVRYKKWKIGT) are Cytoplasmic-facing. A helical membrane pass occupies residues 412 to 432 (SNFLSLPLAIVLTVAIVMIVV). At 433–449 (NQGFQIANPFLPSSHPL) the chain is on the vacuolar side. A helical membrane pass occupies residues 450–470 (LLVATTTSISLLIYYVFLNGV). Residues 471-480 (NWVSPSGDQK) lie on the Cytoplasmic side of the membrane. A helical transmembrane segment spans residues 481–501 (LITIIEISFIYWLILIYVTHG). Residues 502–514 (LSQNKIGDDHTGE) are Vacuolar-facing. The helical transmembrane segment at 515–535 (FPFTVLFFLEATASLFGLIGW) threads the bilayer. Residues 536–598 (TFSRSIKQSS…FGYDWSLQYL (63 aa)) lie on the Cytoplasmic side of the membrane. Positions 542–570 (KQSSNDGSDEPLLTGTAERYGSDDTDEDE) are disordered. Residues 599 to 619 (LIVPISSLIIFNSGWLVLDGI) traverse the membrane as a helical segment. The N-linked (GlcNAc...) asparagine glycan is linked to Asn620. Residues 620–631 (NKSIQESFAAEN) are Vacuolar-facing. Residues 632–652 (LIYLLIQLFSQFWILPILPFV) traverse the membrane as a helical segment. The Cytoplasmic segment spans residues 653–657 (YKLNR). Residues 658 to 678 (FIVFGLTIFAISGVALISFLD) form a helical membrane-spanning segment. Over 679–930 (PFNQENPLKL…LVSVSLKIEV (252 aa)) the chain is Vacuolar. N-linked (GlcNAc...) asparagine glycans are attached at residues Asn697, Asn768, Asn808, and Asn890.

It belongs to the peptidase M28 family. Zn(2+) serves as cofactor.

The protein localises to the vacuole membrane. Functionally, may be involved in vacuolar sorting and osmoregulation. This Candida dubliniensis (strain CD36 / ATCC MYA-646 / CBS 7987 / NCPF 3949 / NRRL Y-17841) (Yeast) protein is Vacuolar membrane protease.